We begin with the raw amino-acid sequence, 459 residues long: Chaperone SurA (459 aa).

Positions 1-23 (MNHRLVALSVASLALLAPLTVPA) are cleaved as a signal peptide. PpiC domains lie at 197 to 301 (VQQI…KVLE) and 312 to 411 (VTQS…QLME).

The protein localises to the periplasm. It carries out the reaction [protein]-peptidylproline (omega=180) = [protein]-peptidylproline (omega=0). Chaperone involved in the correct folding and assembly of outer membrane proteins. Recognizes specific patterns of aromatic residues and the orientation of their side chains, which are found more frequently in integral outer membrane proteins. May act in both early periplasmic and late outer membrane-associated steps of protein maturation. The sequence is that of Chaperone SurA from Albidiferax ferrireducens (strain ATCC BAA-621 / DSM 15236 / T118) (Rhodoferax ferrireducens).